The sequence spans 238 residues: Large ribosomal subunit protein uL2 (238 aa).

Over residues 1-11 (MGKRLISQNRG) the composition is skewed to polar residues. 2 disordered regions span residues 1–22 (MGKR…APSH) and 202–223 (FGGG…APPG).

It belongs to the universal ribosomal protein uL2 family. Part of the 50S ribosomal subunit. Forms a bridge to the 30S subunit in the 70S ribosome.

One of the primary rRNA binding proteins. Required for association of the 30S and 50S subunits to form the 70S ribosome, for tRNA binding and peptide bond formation. It has been suggested to have peptidyltransferase activity; this is somewhat controversial. Makes several contacts with the 16S rRNA in the 70S ribosome. The polypeptide is Large ribosomal subunit protein uL2 (Methanosarcina mazei (strain ATCC BAA-159 / DSM 3647 / Goe1 / Go1 / JCM 11833 / OCM 88) (Methanosarcina frisia)).